The sequence spans 472 residues: Trigger factor (472 aa).

The region spanning G174 to P261 is the PPIase FKBP-type domain. The tract at residues E430–A472 is disordered. Positions A452–A464 are enriched in basic residues.

The protein belongs to the FKBP-type PPIase family. Tig subfamily.

It localises to the cytoplasm. It catalyses the reaction [protein]-peptidylproline (omega=180) = [protein]-peptidylproline (omega=0). Involved in protein export. Acts as a chaperone by maintaining the newly synthesized protein in an open conformation. Functions as a peptidyl-prolyl cis-trans isomerase. This Parasynechococcus marenigrum (strain WH8102) protein is Trigger factor.